The chain runs to 572 residues: Putative two-component response regulator ARR13 (572 aa).

In terms of domain architecture, Response regulatory spans 17 to 134; that stretch reads NVMVVDDNRV…DLPKIYQFAL (118 aa). Asp71 is subject to 4-aspartylphosphate. Positions 175–225 are disordered; it reads KKNCSSKSDTRTVNSTNVSHVSTNGSRKNRKRKPKGGPSDDGESLSQPPKK. The span at 179-197 shows a compositional bias: polar residues; the sequence is SSKSDTRTVNSTNVSHVST. The short motif at 224–227 is the Nuclear localization signal element; sequence KKKK. The segment at residues 227-277 is a DNA-binding region (myb-like GARP); the sequence is KIWWTNPLQDLFLQAIQHIGYDKVVPKKILAIMNVPYLTRENVASHLQKYR. The segment covering 509–522 has biased composition (polar residues); sequence NQDQSNGESSNTIA. A disordered region spans residues 509 to 531; that stretch reads NQDQSNGESSNTIATPETNTPNF.

This sequence belongs to the ARR family. Type-B subfamily. In terms of assembly, binds the target DNA as a monomer. In terms of processing, two-component system major event consists of a His-to-Asp phosphorelay between a sensor histidine kinase (HK) and a response regulator (RR). In plants, the His-to-Asp phosphorelay involves an additional intermediate named Histidine-containing phosphotransfer protein (HPt). This multistep phosphorelay consists of a His-Asp-His-Asp sequential transfer of a phosphate group between first a His and an Asp of the HK protein, followed by the transfer to a conserved His of the HPt protein and finally the transfer to an Asp in the receiver domain of the RR protein.

The protein localises to the nucleus. In terms of biological role, putative transcriptional activator that binds specifically to the DNA sequence 5'-[AG]GATT-3'. Functions as a response regulator involved in His-to-Asp phosphorelay signal transduction system. Phosphorylation of the Asp residue in the receiver domain activates the ability of the protein to promote the transcription of target genes. Could directly activate some type-A response regulators in response to cytokinins. The sequence is that of Putative two-component response regulator ARR13 (ARR13) from Arabidopsis thaliana (Mouse-ear cress).